The following is a 644-amino-acid chain: Transmembrane 9 superfamily member 9 (644 aa).

The first 27 residues, 1 to 27 (MEFYRSSRRLQILGSVILLLSIHVAHS), serve as a signal peptide directing secretion. Topologically, residues 28–281 (FYLPGVAPQD…YLLMSDNQIH (254 aa)) are lumenal. A helical membrane pass occupies residues 282–302 (WFSIVNSLMIVLFLSGMVAMI). The Cytoplasmic segment spans residues 303–351 (MLRTLYRDISRYNELETQEEAQEETGWKLVHGDVFRPPANSDLLCVYVG). Residues 352-372 (TGVQCLGMVLVTMIFAMLGFL) traverse the membrane as a helical segment. The Lumenal segment spans residues 373–377 (SPSNR). Residues 378–398 (GGLMTAMLLLWVFMGLFAGYA) traverse the membrane as a helical segment. At 399–418 (SSRLYKMFKGTEWKRIAFRT) the chain is on the cytoplasmic side. A helical membrane pass occupies residues 419-439 (AFLFPAVVSAIFFVLNALIWG). The Lumenal portion of the chain corresponds to 440 to 451 (QKSSGAVPFGTM). Residues 452 to 472 (FALIFLWFGISVPLVFVGAYL) traverse the membrane as a helical segment. Topologically, residues 473–501 (GFKKPPLDDPVKTNKIPRQIPEQAWYMNP) are cytoplasmic. A helical transmembrane segment spans residues 502–522 (IFSILIGGILPFGAVFIELFF). At 523 to 534 (ILTSIWLNQFYY) the chain is on the lumenal side. The helical transmembrane segment at 535–555 (IFGFLFLVFVILMVTCAEITI) threads the bilayer. Topologically, residues 556 to 573 (VLCYFQLCSEDYLWWWRS) are cytoplasmic. A helical transmembrane segment spans residues 574–594 (YLTSGSSAVYLFLYAAFYFFT). Residues 595–600 (KLQITK) are Lumenal-facing. A helical transmembrane segment spans residues 601-621 (LVSAMLYFGYMLIASYAFFVL). The Cytoplasmic portion of the chain corresponds to 622 to 644 (TGTIGFYACLWFTRLIYSSVKID). The short motif at 633 to 638 (FTRLIY) is the Endoplasmic reticulum export signal element. The Golgi retention signal motif lies at 642-644 (KID).

This sequence belongs to the nonaspanin (TM9SF) (TC 9.A.2) family.

The protein localises to the endosome membrane. It is found in the golgi apparatus membrane. This is Transmembrane 9 superfamily member 9 from Arabidopsis thaliana (Mouse-ear cress).